The primary structure comprises 42 residues: Photosystem I reaction center subunit IX (42 aa).

The chain crosses the membrane as a helical span at residues Tyr8 to Ile28.

Belongs to the PsaJ family.

Its subcellular location is the plastid. It is found in the chloroplast thylakoid membrane. Its function is as follows. May help in the organization of the PsaE and PsaF subunits. The chain is Photosystem I reaction center subunit IX from Rhodomonas salina (Cryptomonas salina).